The sequence spans 115 residues: Secreted RxLR effector protein 2 (115 aa).

Positions 1–22 (MICRSPLIVVMLFVIAAHTVLA) are cleaved as a signal peptide. The RxLR-dEER motif lies at 57–82 (RFLRQETTFEKKLGVNDVHAVHAEER).

This sequence belongs to the RxLR effector family.

It localises to the secreted. It is found in the host cytoplasm. Its subcellular location is the host nucleus. Functionally, effector that acts as a broad suppressor of cell death to interrupt plant immunity. Inhibits cell death induced by cell death-inducing proteins, including the PAMP elicitor INF1 from P.infestans. In Plasmopara viticola (Downy mildew of grapevine), this protein is Secreted RxLR effector protein 2.